The sequence spans 67 residues: DNA-directed RNA polymerase subunit omega (67 aa).

The protein belongs to the RNA polymerase subunit omega family. As to quaternary structure, the RNAP catalytic core consists of 2 alpha, 1 beta, 1 beta' and 1 omega subunit. When a sigma factor is associated with the core the holoenzyme is formed, which can initiate transcription.

It carries out the reaction RNA(n) + a ribonucleoside 5'-triphosphate = RNA(n+1) + diphosphate. Promotes RNA polymerase assembly. Latches the N- and C-terminal regions of the beta' subunit thereby facilitating its interaction with the beta and alpha subunits. The protein is DNA-directed RNA polymerase subunit omega of Polaromonas sp. (strain JS666 / ATCC BAA-500).